The following is a 529-amino-acid chain: Listeriolysin O (529 aa).

A signal peptide spans 1–24; that stretch reads MKKIMLVFITLILVSLPIAQQTEA. 4 beta stranded membrane-spanning segments follow: residues 214 to 227, 234 to 243, 312 to 321, and 329 to 341; these read ESQL…AFKA, VNFGAISEGK, STKVKAAFDA, and SGDV…IKNS. The Conserved undecapeptide signature appears at 483 to 493; the sequence is ECTGLAWEWWR. The Cholesterol binding motif lies at 515–516; the sequence is TL.

This sequence belongs to the cholesterol-dependent cytolysin family. In terms of assembly, homooligomeric pore complex of 35 to 50 subunits; when inserted in the host membrane.

It localises to the secreted. It is found in the host membrane. The protein resides in the host cell membrane. With respect to regulation, activity of listeriolysin O is regulated on multiple levels. It should be high in the phagosome, thereby allowing escape of the bacteria from the phagosomal compartment. Then, once inside the host cytosol, the activity must be controlled to prevent lysis of the host plasma membrane and loss of the intracellular environment. In terms of biological role, a cholesterol-dependent toxin that causes cytolysis by forming pores in cholesterol containing host membranes. After binding to target membranes, the protein undergoes a major conformation change, leading to its insertion in the host membrane and formation of an oligomeric pore complex. Cholesterol is required for binding to host membranes, membrane insertion and pore formation; cholesterol binding is mediated by a Thr-Leu pair in the C-terminus. Acts as a major virulence factor required for the escape of bacteria from phagosomal vacuoles and entry into the host cytosol. Can be reversibly inactivated by oxidation. The chain is Listeriolysin O (hly) from Listeria monocytogenes serotype 4b (strain F2365).